Reading from the N-terminus, the 553-residue chain is Transcription factor 7-like 1 (553 aa).

A compositionally biased stretch (gly residues) spans 1–11 (MPQLNSGGGDE). The tract at residues 1–61 (MPQLNSGGGD…SENHSSDSDS (61 aa)) is interaction with CTNNB1. Disordered regions lie at residues 1-77 (MPQL…EKPR), 183-213 (GTPP…PYYP), and 392-474 (SARD…LTTK). Basic and acidic residues-rich tracts occupy residues 17–32 (ELIR…EKSP) and 52–77 (SENH…EKPR). The tract at residues 109-312 (LGGHYLPNGA…SPNLITKPSV (204 aa)) is interaction with AES and TLE4. Residues 324 to 392 (IKKPLNAFML…LHSQLYPTWS (69 aa)) constitute a DNA-binding region (HMG box). Positions 407–416 (KQSPEMEITK) are enriched in basic and acidic residues. Residues 408-553 (QSPEMEITKT…PLSLVTKSSD (146 aa)) form an interaction with CTBP region. The span at 444–463 (SPATPSAALASPAAPAATHS) shows a compositional bias: low complexity. Residues 464–473 (EQAQPLSLTT) show a composition bias toward polar residues.

The protein belongs to the TCF/LEF family. Interacts with csnk1e, ctnnb1, ctbp, dact1 and gsk3b. May interact with ase and tle4. In terms of processing, phosphorylated. Phosphorylation by csnk1e promotes binding to ctnnb1 while phosphorylation by gsk3b may reverse this effect.

The protein localises to the nucleus. Functionally, participates in the Wnt signaling pathway. Binds to DNA and acts as a repressor in the absence of ctnnb1, and as an activator in its presence. Required early in development for the establishment of the dorsal body axis in response to maternal Wnt signaling. The sequence is that of Transcription factor 7-like 1 (tcf7l1) from Xenopus tropicalis (Western clawed frog).